Reading from the N-terminus, the 333-residue chain is Lipoyl synthase (333 aa).

A disordered region spans residues 1–29; that stretch reads MTDSASGASAVANIATPSNEPYDATRKQK. [4Fe-4S] cluster contacts are provided by C80, C85, C91, C106, C110, C113, and S320. The 219-residue stretch at 91–309 folds into the Radical SAM core domain; that stretch reads CFGKGTATFM…EEKAYEMGFT (219 aa).

This sequence belongs to the radical SAM superfamily. Lipoyl synthase family. It depends on [4Fe-4S] cluster as a cofactor.

It localises to the cytoplasm. The catalysed reaction is [[Fe-S] cluster scaffold protein carrying a second [4Fe-4S](2+) cluster] + N(6)-octanoyl-L-lysyl-[protein] + 2 oxidized [2Fe-2S]-[ferredoxin] + 2 S-adenosyl-L-methionine + 4 H(+) = [[Fe-S] cluster scaffold protein] + N(6)-[(R)-dihydrolipoyl]-L-lysyl-[protein] + 4 Fe(3+) + 2 hydrogen sulfide + 2 5'-deoxyadenosine + 2 L-methionine + 2 reduced [2Fe-2S]-[ferredoxin]. It participates in protein modification; protein lipoylation via endogenous pathway; protein N(6)-(lipoyl)lysine from octanoyl-[acyl-carrier-protein]: step 2/2. In terms of biological role, catalyzes the radical-mediated insertion of two sulfur atoms into the C-6 and C-8 positions of the octanoyl moiety bound to the lipoyl domains of lipoate-dependent enzymes, thereby converting the octanoylated domains into lipoylated derivatives. In Ralstonia nicotianae (strain ATCC BAA-1114 / GMI1000) (Ralstonia solanacearum), this protein is Lipoyl synthase.